The primary structure comprises 252 residues: Triosephosphate isomerase (252 aa).

10–12 is a binding site for substrate; the sequence is NWK. Histidine 96 acts as the Electrophile in catalysis. The active-site Proton acceptor is glutamate 168. Substrate-binding positions include glycine 174, serine 214, and 235-236; that span reads GG.

This sequence belongs to the triosephosphate isomerase family. Homodimer.

Its subcellular location is the cytoplasm. It carries out the reaction D-glyceraldehyde 3-phosphate = dihydroxyacetone phosphate. Its pathway is carbohydrate biosynthesis; gluconeogenesis. The protein operates within carbohydrate degradation; glycolysis; D-glyceraldehyde 3-phosphate from glycerone phosphate: step 1/1. In terms of biological role, involved in the gluconeogenesis. Catalyzes stereospecifically the conversion of dihydroxyacetone phosphate (DHAP) to D-glyceraldehyde-3-phosphate (G3P). The protein is Triosephosphate isomerase of Lactobacillus acidophilus (strain ATCC 700396 / NCK56 / N2 / NCFM).